Consider the following 154-residue polypeptide: Large ribosomal subunit protein uL22 (154 aa).

It belongs to the universal ribosomal protein uL22 family. As to quaternary structure, part of the 50S ribosomal subunit.

Its function is as follows. This protein binds specifically to 23S rRNA. It makes multiple contacts with different domains of the 23S rRNA in the assembled 50S subunit and ribosome. The globular domain of the protein is located near the polypeptide exit tunnel on the outside of the subunit, while an extended beta-hairpin is found that lines the wall of the exit tunnel in the center of the 70S ribosome. The chain is Large ribosomal subunit protein uL22 from Methanoregula boonei (strain DSM 21154 / JCM 14090 / 6A8).